The sequence spans 155 residues: Large ribosomal subunit protein uL13 (155 aa).

The protein belongs to the universal ribosomal protein uL13 family. In terms of assembly, part of the 50S ribosomal subunit.

In terms of biological role, this protein is one of the early assembly proteins of the 50S ribosomal subunit, although it is not seen to bind rRNA by itself. It is important during the early stages of 50S assembly. This chain is Large ribosomal subunit protein uL13, found in Rickettsia conorii (strain ATCC VR-613 / Malish 7).